The following is a 154-amino-acid chain: Cyclin-dependent protein kinase inhibitor SMR11 (154 aa).

The tract at residues 1–44 (MEQEEPCEAKETASSSIEPKTPNPNVPDSIPAIDSDSSLSEEEI) is disordered. Low complexity predominate over residues 27 to 38 (PDSIPAIDSDSS).

In terms of assembly, interacts with CYCB2-4.

Functionally, probable cyclin-dependent protein kinase (CDK) inhibitor that functions as a repressor of mitosis in the endoreduplication cell cycle. In Arabidopsis thaliana (Mouse-ear cress), this protein is Cyclin-dependent protein kinase inhibitor SMR11.